Here is a 175-residue protein sequence, read N- to C-terminus: Major oleosin NAP-II (175 aa).

The segment at 1-47 (RRDQYPRDRDQYSMIGRDRDKYSMIGRDRDQYNMYGRDYSKSRQIAK) is polar. 2 consecutive repeats follow at residues 17 to 26 (RDRDKYSMIG) and 27 to 36 (RDRDQYNMYG). The tract at residues 48–119 (AVTAVTAGGS…AAITVFSWIY (72 aa)) is hydrophobic. 3 helical membrane-spanning segments follow: residues 56 to 76 (GSLL…LTVA), 78 to 98 (PLLV…ALLI), and 99 to 119 (TGFL…SWIY). The tract at residues 151-175 (AQYYGQQQTGGEDDRDRTRGTQHTT) is disordered.

It belongs to the oleosin family.

Its subcellular location is the lipid droplet. It is found in the membrane. May have a structural role to stabilize the lipid body during desiccation of the seed by preventing coalescence of the oil. Probably interacts with both lipid and phospholipid moieties of lipid bodies. May also provide recognition signals for specific lipase anchorage in lipolysis during seedling growth. The polypeptide is Major oleosin NAP-II (Brassica napus (Rape)).